The chain runs to 123 residues: UPF0102 protein MCA0184 (123 aa).

The protein belongs to the UPF0102 family.

In Methylococcus capsulatus (strain ATCC 33009 / NCIMB 11132 / Bath), this protein is UPF0102 protein MCA0184.